The sequence spans 317 residues: Cyclin-T1-3 (317 aa).

The protein belongs to the cyclin family. Cyclin T subfamily. In terms of assembly, interacts with CDKC-1 and CDKC-2. As to expression, abundantly expressed in flowers. Expressed in roots, seedlings, rosettes and stems.

The sequence is that of Cyclin-T1-3 (CYCT1-3) from Arabidopsis thaliana (Mouse-ear cress).